We begin with the raw amino-acid sequence, 119 residues long: Large ribosomal subunit protein uL14 (119 aa).

The protein belongs to the universal ribosomal protein uL14 family. Part of the 50S ribosomal subunit. Forms a cluster with proteins L3 and L19. In the 70S ribosome, L14 and L19 interact and together make contacts with the 16S rRNA in bridges B5 and B8.

Its function is as follows. Binds to 23S rRNA. Forms part of two intersubunit bridges in the 70S ribosome. This Anaplasma phagocytophilum (strain HZ) protein is Large ribosomal subunit protein uL14.